We begin with the raw amino-acid sequence, 249 residues long: Putative ABC transporter ATP-binding protein GSU1281 (249 aa).

An ABC transporter domain is found at 6-236 (VEVRDLCHCY…DELLATCRLE (231 aa)). An ATP-binding site is contributed by 39 to 46 (GANGAGKS).

This sequence belongs to the ABC transporter superfamily.

The protein localises to the cell inner membrane. In terms of biological role, probably part of an ABC transporter complex. Responsible for energy coupling to the transport system. The polypeptide is Putative ABC transporter ATP-binding protein GSU1281 (Geobacter sulfurreducens (strain ATCC 51573 / DSM 12127 / PCA)).